Consider the following 571-residue polypeptide: MTIEALADVVRLHPELALFAAIVFGHFIGKIEIRKVSLGTVVGTLIAGMILGLLFEPEIPDLLKWAFFDLFLFAVGYSAGPQFFASLKREALPQMALAVVVSCTGLAAAIAMVALFRFDPGLSAGLVSGSMTQSAALGSALSAIAAMDVDEATRALLTAHAPLADATTYIFGEVGLILFVTVVAPRLLKVDLRQVAREAEAELQARTDEDDAALWDQAPLSLRTYRLENAELDQRTVHEFERRYAAGRLTVTGIRRGDQLLRDVGADARLALGDIVLVASRRAGVVGAALEVGTEVDDQELLSEPMVRASIVLTRREMAGKTLGELARGAARGLFLDSLHRGESTLPRAMGTRVQRGDVFKLTGSRAAIATAARNLGFIEHDQGRTDLVYLAGGVVVGILFGLLQVRLTGVPLGLGTSGGVLVVGLVAGWLYSRYPVVGHIPEPALRLLSDVGLIVFIAAIGLAAGPHAVQAIHEGGIALFAKLVGAGVVVTLAGPIAGLLLGHYVLKLPPVALLPGIAGAQTTVATLNALKERGGSDVYAIGFTVPFAVSNVLITLWGPVIVACAVALSR.

Helical transmembrane passes span valine 10 to glycine 29, valine 36 to phenylalanine 55, tryptophan 65 to leucine 87, alanine 96 to phenylalanine 118, and alanine 166 to leucine 188. One can recognise an RCK C-terminal domain in the interval threonine 294–phenylalanine 378. A run of 6 helical transmembrane segments spans residues leucine 388–valine 406, valine 411–serine 433, leucine 446–alanine 465, leucine 480–leucine 502, leucine 509–leucine 531, and valine 546–alanine 568.

The protein belongs to the AAE transporter (TC 2.A.81) family.

The protein localises to the cell membrane. This is an uncharacterized protein from Bordetella parapertussis (strain 12822 / ATCC BAA-587 / NCTC 13253).